The following is a 228-amino-acid chain: Cytidylate kinase (228 aa).

Residue 17-25 (GPTASGKGT) participates in ATP binding.

This sequence belongs to the cytidylate kinase family. Type 1 subfamily.

The protein resides in the cytoplasm. It catalyses the reaction CMP + ATP = CDP + ADP. It carries out the reaction dCMP + ATP = dCDP + ADP. The sequence is that of Cytidylate kinase from Burkholderia thailandensis (strain ATCC 700388 / DSM 13276 / CCUG 48851 / CIP 106301 / E264).